Reading from the N-terminus, the 205-residue chain is Nascent polypeptide-associated complex subunit alpha-like protein (205 aa).

2 disordered regions span residues 1-73 and 137-166; these read MPSV…RKAM and KAPN…DTGV. A compositionally biased stretch (basic and acidic residues) spans 20-29; the sequence is EQQELEHSDE. Residues 30-51 show a composition bias toward acidic residues; the sequence is PILEDDEDDDDEEDDNDEDDAQ. Positions 56-66 are enriched in basic and acidic residues; that stretch reads GEGKSKQSRSE. An NAC-A/B domain is found at 63–128; sequence SRSEKKCRKA…AKIEDLSSQL (66 aa). The span at 155–165 shows a compositional bias: acidic residues; it reads QEDEDEVDDTG. One can recognise a UBA domain in the interval 166–203; the sequence is VEPKDIELVMTQAGVSRTKAVKALKAADGDIVSAIMDL.

This sequence belongs to the NAC-alpha family.

Functionally, may promote appropriate targeting of ribosome-nascent polypeptide complexes. This chain is Nascent polypeptide-associated complex subunit alpha-like protein, found in Pinus taeda (Loblolly pine).